The chain runs to 242 residues: Floral homeotic protein AGAMOUS (242 aa).

Residues 19–73 (RGKIEIKRIENTTNRQVTFCKRRNGLLKKAYELSVLCDAEVALIVFSSRGRLYEY) form the MADS-box domain. Residues 103–193 (AQYYQQEASK…RAKIAETERS (91 aa)) form the K-box domain.

As to expression, expressed exclusively in stamens and carpels.

It localises to the nucleus. In terms of biological role, probable transcription factor involved in regulating genes that determines stamen and carpel development in wild-type flowers. The protein is Floral homeotic protein AGAMOUS (AG1) of Petunia hybrida (Petunia).